Consider the following 290-residue polypeptide: Enoyl-CoA hydratase, mitochondrial (290 aa).

A mitochondrion-targeting transit peptide spans 1 to 27 (MAALRVLLSCVRGPLRPPVRCPAWRPF). Position 46 is a phosphothreonine (Thr-46). Residue 98 to 101 (ADIK) coordinates substrate. Lys-101 carries the post-translational modification N6-acetyllysine; alternate. The residue at position 101 (Lys-101) is an N6-succinyllysine; alternate. Ser-114 is subject to Phosphoserine. Position 115 is an N6-acetyllysine; alternate (Lys-115). Lys-115 is modified (N6-succinyllysine; alternate). Lys-118 is subject to N6-acetyllysine. Residue Gly-141 coordinates substrate. Lys-204 is subject to N6-succinyllysine. At Lys-211 the chain carries N6-acetyllysine.

Belongs to the enoyl-CoA hydratase/isomerase family. In terms of assembly, homohexamer; dimer of trimers. In terms of tissue distribution, liver, fibroblast, muscle. Barely detectable in spleen and kidney.

Its subcellular location is the mitochondrion matrix. It catalyses the reaction a (3S)-3-hydroxyacyl-CoA = a (2E)-enoyl-CoA + H2O. It carries out the reaction a (3E)-enoyl-CoA = a 4-saturated (2E)-enoyl-CoA. The enzyme catalyses (3E)-hexenoyl-CoA = (2E)-hexenoyl-CoA. The catalysed reaction is (3S)-3-hydroxybutanoyl-CoA = (2E)-butenoyl-CoA + H2O. It catalyses the reaction 3-hydroxyisovaleryl-CoA = 3-methylbut-2-enoyl-CoA + H2O. It carries out the reaction 3-hydroxypropanoyl-CoA = acryloyl-CoA + H2O. The enzyme catalyses 3-hydroxybutanoyl-CoA = (2E)-butenoyl-CoA + H2O. The catalysed reaction is 2-methylpropenoyl-CoA + H2O = (S)-3-hydroxyisobutanoyl-CoA. It catalyses the reaction (3S)-hydroxyhexanoyl-CoA = (2E)-hexenoyl-CoA + H2O. It carries out the reaction (3S)-hydroxydecanoyl-CoA = (2E)-decenoyl-CoA + H2O. It functions in the pathway lipid metabolism; fatty acid beta-oxidation. Converts unsaturated trans-2-enoyl-CoA species ((2E)-enoyl-CoA) to the corresponding (3S)-3hydroxyacyl-CoA species through addition of a water molecule to the double bond. Catalyzes the hydration of medium- and short-chained fatty enoyl-CoA thioesters from 4 carbons long (C4) up to C16. Has high substrate specificity for crotonyl-CoA ((2E)-butenoyl-CoA) and moderate specificity for acryloyl-CoA, 3-methylcrotonyl-CoA (3-methyl-(2E)-butenoyl-CoA) and methacrylyl-CoA ((2E)-2-methylpropenoyl-CoA). Can bind tiglyl-CoA (2-methylcrotonoyl-CoA), but hydrates only a small amount of this substrate. Plays a key role in the beta-oxidation spiral of short- and medium-chain fatty acid oxidation. At a lower rate than the hydratase reaction, catalyzes the isomerase reaction of trans-3-enoyl-CoA species (such as (3E)-hexenoyl-CoA) to trans-2-enoyl-CoA species (such as (2E)-hexenoyl-CoA), which are subsequently hydrated to 3(S)-3-hydroxyacyl-CoA species (such as (3S)-hydroxyhexanoyl-CoA). The polypeptide is Enoyl-CoA hydratase, mitochondrial (Homo sapiens (Human)).